Consider the following 813-residue polypeptide: Nuclear pore complex protein 5 (813 aa).

Belongs to the nucleoporin Nup84/Nup107 family. Part of the nuclear pore complex (NPC). May interact with mdf-1.

It localises to the nucleus. It is found in the nuclear pore complex. Its subcellular location is the chromosome. The protein resides in the centromere. The protein localises to the kinetochore. It localises to the nucleus membrane. Its function is as follows. Involved in kinetochore assembly and chromosome segregation during embryonic mitosis. Required for the localization of the NDC80 complex member him-10, the chromosomal passenger complex component air-2 and nuclear pore complex proteins npp-23 and npp-15 to kinetochores during metaphase. Required for npp-23 localization to the nuclear envelope during interphase. Recruits mdf-1, a component of the spindle assembly checkpoint, to the nuclear envelope. Appears dispensable for the assembly of the nuclear pore complex and for nuclear protein import. The chain is Nuclear pore complex protein 5 from Caenorhabditis elegans.